The chain runs to 20 residues: Beta-1,3-glucan-binding protein 2 (20 aa).

Belongs to the insect beta-1,3-glucan binding protein family. Monomer.

The protein resides in the secreted. In terms of biological role, involved in the recognition of invading microorganisms causing their aggregation. Activates the phenoloxidase cascade. Binds specifically to beta-1,3-glucan. Binds the A.niger cell wall component alpha-1,3-glucan, a fungal pathogen-associated molecular pattern (PAMP) that activates the host immune response. This is Beta-1,3-glucan-binding protein 2 from Galleria mellonella (Greater wax moth).